Here is a 294-residue protein sequence, read N- to C-terminus: N-acetylmuramic acid 6-phosphate etherase (294 aa).

In terms of domain architecture, SIS spans 54–217 (VIASFRKGGR…STTSMIGVGK (164 aa)). Glutamate 82 (proton donor) is an active-site residue. Residue glutamate 113 is part of the active site.

This sequence belongs to the GCKR-like family. MurNAc-6-P etherase subfamily. As to quaternary structure, homodimer.

It catalyses the reaction N-acetyl-D-muramate 6-phosphate + H2O = N-acetyl-D-glucosamine 6-phosphate + (R)-lactate. It functions in the pathway amino-sugar metabolism; N-acetylmuramate degradation. Functionally, specifically catalyzes the cleavage of the D-lactyl ether substituent of MurNAc 6-phosphate, producing GlcNAc 6-phosphate and D-lactate. This Exiguobacterium sp. (strain ATCC BAA-1283 / AT1b) protein is N-acetylmuramic acid 6-phosphate etherase.